A 202-amino-acid polypeptide reads, in one-letter code: MKALTTRQKEVFDLIRDHITQTGMPPTRAEIASRLGFRSPNAAEEHLKALARKGAIEIVSGASRGIRLMIEEESGLPLIGRVAAGEPLLATQHIESHYQVDPALFKPHADFLLRVSGMSMKDIGIMDGDLLAVHKTQDACNGQVVVARIDDDVTVKRLKRQGNIVELLPENSEFDPIVVDLRQQELTIEGLAVGVIRNGNWL.

A DNA-binding region (H-T-H motif) is located at residues 28–48 (RAEIASRLGFRSPNAAEEHLK). Residues Ser119 and Lys156 each act as for autocatalytic cleavage activity in the active site.

This sequence belongs to the peptidase S24 family. In terms of assembly, homodimer.

It carries out the reaction Hydrolysis of Ala-|-Gly bond in repressor LexA.. Functionally, represses a number of genes involved in the response to DNA damage (SOS response), including recA and lexA. Binds to the 16 bp palindromic sequence 5'-CTGTATATATATACAG-3'. In the presence of single-stranded DNA, RecA interacts with LexA causing an autocatalytic cleavage which disrupts the DNA-binding part of LexA, leading to derepression of the SOS regulon and eventually DNA repair. This Sodalis glossinidius (strain morsitans) protein is LexA repressor.